Reading from the N-terminus, the 523-residue chain is Occludin (523 aa).

The tract at residues 1-20 (MSVRPFESPPPYRPDEFKPN) is disordered. At 1 to 66 (MSVRPFESPP…KWTSPPGVIR (66 aa)) the chain is on the cytoplasmic side. In terms of domain architecture, MARVEL spans 60–269 (SPPGVIRILS…IIVFAVKTRR (210 aa)). The chain crosses the membrane as a helical span at residues 67 to 87 (ILSMLVIVMCIAVFACVASTL). The Extracellular portion of the chain corresponds to 88–140 (AWDRAYGTGIFGGSMNYPYGSGFGSYGGGFGGYGYGYGYGYGGYTDPRAAKGF). The helical transmembrane segment at 141–161 (LLAMAAFCFIASLVIFVTSVI) threads the bilayer. At 162-173 (RSGMSRTRRYYL) the chain is on the cytoplasmic side. The chain crosses the membrane as a helical span at residues 174-194 (IVIIVSAILGIMVFIATIVYI). Residues 195-244 (MGVNPTAQASGSMYGSQIYTICSQFYTPGGTGLYVDQYLYHYCVVDPQEA) are Extracellular-facing. An intrachain disulfide couples Cys-216 to Cys-237. Residues 245–265 (IAIVLGFMIIVAFALIIVFAV) traverse the membrane as a helical segment. Residues 266 to 523 (KTRRKMDRYD…MVGDYDRRKT (258 aa)) lie on the Cytoplasmic side of the membrane. Phosphoserine is present on Ser-302. Positions 302–338 (SAGTQDMPPPPSDYAERVDSPMAYSSNGKVNGKRSYP) are disordered. Thr-305 bears the Phosphothreonine mark. 4 positions are modified to phosphoserine: Ser-313, Ser-321, Ser-340, and Ser-360. Positions 363–408 (DFRQPRYSSNDNLETPSKRTPTKGKAGKAKRTDPDHYETDYTTGGE) are disordered. The segment covering 368 to 381 (RYSSNDNLETPSKR) has biased composition (polar residues). A Phosphotyrosine modification is found at Tyr-369. Phosphoserine is present on residues Ser-370 and Ser-371. The span at 382-391 (TPTKGKAGKA) shows a compositional bias: basic residues. Positions 392 to 401 (KRTDPDHYET) are enriched in basic and acidic residues. Phosphotyrosine is present on residues Tyr-399 and Tyr-403. Residues Thr-404 and Thr-405 each carry the phosphothreonine; by PKC/PRKCH modification. Phosphoserine is present on Ser-409. In terms of domain architecture, OCEL spans 415-523 (EDWLREYPPI…MVGDYDRRKT (109 aa)). Positions 433 to 489 (YKRNFDAGLQEYKSLLAELDEVNKELSRLDRELDDYREESEEYMAAADEYNRLKQVK) form a coiled coil. Ser-491 is modified (phosphoserine).

Belongs to the ELL/occludin family. Interacts with TJP1/ZO1. Interacts with VAPA. Interacts with CLDN1, CLDN6, CLDN9, CLDN11, CLDN12 and CLDN17. Interacts with PLSCR1. Interacts with LSR, ILDR1 and ILDR2. Interacts with TJP2/ZO2. In terms of processing, dephosphorylated by PTPRJ.

It localises to the cell membrane. The protein localises to the cell junction. The protein resides in the tight junction. Its function is as follows. May play a role in the formation and regulation of the tight junction (TJ) paracellular permeability barrier. May be involved in the organization of actin in endothelial cells. This chain is Occludin (Ocln), found in Rattus norvegicus (Rat).